The following is a 308-amino-acid chain: Homoserine O-acetyltransferase (308 aa).

Residue Cys142 is the Acyl-thioester intermediate of the active site. Residues Lys163 and Ser192 each contribute to the substrate site. The active-site Proton acceptor is the His235. Glu237 is an active-site residue. A substrate-binding site is contributed by Arg249.

This sequence belongs to the MetA family.

The protein resides in the cytoplasm. It catalyses the reaction L-homoserine + acetyl-CoA = O-acetyl-L-homoserine + CoA. It participates in amino-acid biosynthesis; L-methionine biosynthesis via de novo pathway; O-acetyl-L-homoserine from L-homoserine: step 1/1. In terms of biological role, transfers an acetyl group from acetyl-CoA to L-homoserine, forming acetyl-L-homoserine. In Agrobacterium fabrum (strain C58 / ATCC 33970) (Agrobacterium tumefaciens (strain C58)), this protein is Homoserine O-acetyltransferase.